A 77-amino-acid polypeptide reads, in one-letter code: Sec-independent protein translocase protein TatA (77 aa).

Residues 1-21 (MGGLSIWHWLIVLLIVALVFG) traverse the membrane as a helical segment. The disordered stretch occupies residues 43 to 77 (MKESEAPADAQQLPRSGSVNVDAKDAARSSDSNKA). Residues 64–77 (DAKDAARSSDSNKA) show a composition bias toward basic and acidic residues.

The protein belongs to the TatA/E family. As to quaternary structure, the Tat system comprises two distinct complexes: a TatABC complex, containing multiple copies of TatA, TatB and TatC subunits, and a separate TatA complex, containing only TatA subunits. Substrates initially bind to the TatABC complex, which probably triggers association of the separate TatA complex to form the active translocon.

The protein resides in the cell inner membrane. In terms of biological role, part of the twin-arginine translocation (Tat) system that transports large folded proteins containing a characteristic twin-arginine motif in their signal peptide across membranes. TatA could form the protein-conducting channel of the Tat system. The sequence is that of Sec-independent protein translocase protein TatA from Burkholderia mallei (strain NCTC 10247).